The chain runs to 265 residues: Mlc titration factor A (265 aa).

Zn(2+)-binding residues include His-111, His-148, His-152, and Glu-211.

The protein belongs to the MtfA family. As to quaternary structure, interacts with Mlc. Requires Zn(2+) as cofactor.

It is found in the cytoplasm. In terms of biological role, involved in the modulation of the activity of the glucose-phosphotransferase system (glucose-PTS). Interacts with the transcriptional repressor Mlc, preventing its interaction with DNA and leading to the modulation of expression of genes regulated by Mlc, including ptsG, which encodes the PTS system glucose-specific EIICB component. Shows zinc-dependent metallopeptidase activity. This Salmonella enteritidis PT4 (strain P125109) protein is Mlc titration factor A.